Reading from the N-terminus, the 114-residue chain is ATP synthase epsilon chain (114 aa).

It belongs to the ATPase epsilon chain family. F-type ATPases have 2 components, CF(1) - the catalytic core - and CF(0) - the membrane proton channel. CF(1) has five subunits: alpha(3), beta(3), gamma(1), delta(1), epsilon(1). CF(0) has three main subunits: a, b and c.

The protein resides in the cell membrane. Its function is as follows. Produces ATP from ADP in the presence of a proton gradient across the membrane. This chain is ATP synthase epsilon chain, found in Wolbachia pipientis wMel.